The following is a 370-amino-acid chain: Probable endopolygalacturonase A (370 aa).

An N-terminal signal peptide occupies residues 1–19 (MPSAKPLFCLATLAGAALA). The propeptide occupies 20–32 (APAPSRVSDFTKR). Cysteine 35 and cysteine 50 are oxidised to a cystine. 6 PbH1 repeats span residues 162 to 192 (SDNL…DISE), 193 to 214 (STYI…AINS), 215 to 235 (GENI…SIGS), 244 to 265 (VKNV…RIKT), 273 to 295 (VEDI…VIEQ), and 307 to 352 (SNGV…DITG). Aspartate 207 functions as the Proton donor in the catalytic mechanism. Cysteine 209 and cysteine 225 are oxidised to a cystine. Histidine 229 is an active-site residue. The N-linked (GlcNAc...) asparagine glycan is linked to asparagine 246. 2 disulfides stabilise this stretch: cysteine 335-cysteine 340 and cysteine 359-cysteine 368.

This sequence belongs to the glycosyl hydrolase 28 family.

The protein localises to the secreted. It catalyses the reaction (1,4-alpha-D-galacturonosyl)n+m + H2O = (1,4-alpha-D-galacturonosyl)n + (1,4-alpha-D-galacturonosyl)m.. Functionally, involved in maceration and soft-rotting of plant tissue. Hydrolyzes the 1,4-alpha glycosidic bonds of de-esterified pectate in the smooth region of the plant cell wall. In Aspergillus niger (strain ATCC MYA-4892 / CBS 513.88 / FGSC A1513), this protein is Probable endopolygalacturonase A (pgaA).